The chain runs to 401 residues: Coenzyme A biosynthesis bifunctional protein CoaBC (401 aa).

Residues 1 to 190 form a phosphopantothenoylcysteine decarboxylase region; it reads MQTLAGKKIL…FQPKPLQDKS (190 aa). Residue C159 is the Proton donor of the active site. The interval 191–401 is phosphopantothenate--cysteine ligase; sequence ILITAGPTRE…LKQIQTLMGH (211 aa). Residues D279, K289, 307–310, F326, K340, and K344 each bind CTP; that span reads PDIV.

In the N-terminal section; belongs to the HFCD (homo-oligomeric flavin containing Cys decarboxylase) superfamily. It in the C-terminal section; belongs to the PPC synthetase family. The cofactor is Mg(2+). It depends on FMN as a cofactor.

It carries out the reaction N-[(R)-4-phosphopantothenoyl]-L-cysteine + H(+) = (R)-4'-phosphopantetheine + CO2. It catalyses the reaction (R)-4'-phosphopantothenate + L-cysteine + CTP = N-[(R)-4-phosphopantothenoyl]-L-cysteine + CMP + diphosphate + H(+). It participates in cofactor biosynthesis; coenzyme A biosynthesis; CoA from (R)-pantothenate: step 2/5. Its pathway is cofactor biosynthesis; coenzyme A biosynthesis; CoA from (R)-pantothenate: step 3/5. In terms of biological role, catalyzes two sequential steps in the biosynthesis of coenzyme A. In the first step cysteine is conjugated to 4'-phosphopantothenate to form 4-phosphopantothenoylcysteine. In the second step the latter compound is decarboxylated to form 4'-phosphopantotheine. In Vibrio vulnificus (strain CMCP6), this protein is Coenzyme A biosynthesis bifunctional protein CoaBC.